A 329-amino-acid polypeptide reads, in one-letter code: Probable acyltransferase FabY (329 aa).

The N-acetyltransferase domain maps to 18-162; it reads YHLRVPQTEE…RHFLMIKPVA (145 aa).

This sequence belongs to the acetyltransferase family. FabY subfamily.

It functions in the pathway lipid metabolism; fatty acid biosynthesis. In terms of biological role, supports initiation of fatty acid biosynthesis in the absence of FabH. This is Probable acyltransferase FabY from Escherichia coli O157:H7.